The chain runs to 315 residues: Replication factor C small subunit (315 aa).

43–50 provides a ligand contact to ATP; the sequence is GSPGVGKT.

It belongs to the activator 1 small subunits family. RfcS subfamily. As to quaternary structure, heteromultimer composed of small subunits (RfcS) and large subunits (RfcL).

Part of the RFC clamp loader complex which loads the PCNA sliding clamp onto DNA. The polypeptide is Replication factor C small subunit (Methanococcus maripaludis (strain C7 / ATCC BAA-1331)).